Here is a 565-residue protein sequence, read N- to C-terminus: Inositol-3-phosphate synthase (565 aa).

Positions 70, 71, 72, 73, 144, 180, 181, 191, 194, 231, 232, 233, 234, 282, 283, 307, 310, 341, 342, 343, 356, 394, 395, 423, and 424 each coordinate NAD(+). S536 is modified (phosphoserine). A disordered region spans residues 546–565; sequence LHANGHSNGSAKLATNGNGH. Over residues 550-565 the composition is skewed to polar residues; the sequence is GHSNGSAKLATNGNGH.

This sequence belongs to the myo-inositol 1-phosphate synthase family. It depends on NAD(+) as a cofactor. Higher expression in adult heads than bodies.

It is found in the cytoplasm. It catalyses the reaction D-glucose 6-phosphate = 1D-myo-inositol 3-phosphate. Its pathway is polyol metabolism; myo-inositol biosynthesis; myo-inositol from D-glucose 6-phosphate: step 1/2. Functionally, key enzyme in myo-inositol biosynthesis pathway that catalyzes the conversion of glucose 6-phosphate to 1-myo-inositol 1-phosphate in a NAD-dependent manner. Rate-limiting enzyme in the synthesis of all inositol-containing compounds. The sequence is that of Inositol-3-phosphate synthase (Inos) from Drosophila melanogaster (Fruit fly).